Here is a 310-residue protein sequence, read N- to C-terminus: Homeobox protein Hox-A13a (310 aa).

Residues glycine 244–valine 303 constitute a DNA-binding region (homeobox).

Belongs to the Abd-B homeobox family.

The protein resides in the nucleus. Functionally, sequence-specific transcription factor which is part of a developmental regulatory system that provides cells with specific positional identities on the anterior-posterior axis. In Danio rerio (Zebrafish), this protein is Homeobox protein Hox-A13a (hoxa13a).